The chain runs to 55 residues: Large ribosomal subunit protein bL33 (55 aa).

Over residues 1–11 the composition is skewed to basic and acidic residues; sequence MAKSGRDKIKL. The interval 1–27 is disordered; it reads MAKSGRDKIKLESTAGTGHFYTTTKNK. The span at 14-24 shows a compositional bias: polar residues; that stretch reads TAGTGHFYTTT.

The protein belongs to the bacterial ribosomal protein bL33 family.

The chain is Large ribosomal subunit protein bL33 from Herminiimonas arsenicoxydans.